A 153-amino-acid polypeptide reads, in one-letter code: MGKISSLPTQLFKICLCDFLKIKIHIMSSSHLFYLALCLLTFTSSTTAGPETLCGAELVDALQFVCGPRGFYFNKPTGYGSSIRRAPQTGIVDECCFRSCDLRRLEMYCAPLKPTKAARSIRAQRHTDMPKTQKEVHLKNTSRGSAGNKTYRM.

Positions 49–77 (GPETLCGAELVDALQFVCGPRGFYFNKPT) are b. 3 disulfide bridges follow: cysteine 54–cysteine 96, cysteine 66–cysteine 109, and cysteine 95–cysteine 100. Residues 78-89 (GYGSSIRRAPQT) are c. Positions 90 to 110 (GIVDECCFRSCDLRRLEMYCA) are a. A d region spans residues 111 to 118 (PLKPTKAA). A propeptide spans 119-153 (RSIRAQRHTDMPKTQKEVHLKNTSRGSAGNKTYRM) (e peptide). A disordered region spans residues 120-153 (SIRAQRHTDMPKTQKEVHLKNTSRGSAGNKTYRM). Over residues 125 to 138 (RHTDMPKTQKEVHL) the composition is skewed to basic and acidic residues. A compositionally biased stretch (polar residues) spans 139–153 (KNTSRGSAGNKTYRM).

Belongs to the insulin family. In terms of assembly, forms a ternary complex with IGFR1 and ITGAV:ITGB3. Forms a ternary complex with IGFR1 and ITGA6:ITGB4. Interacts with SH2D3C isoform 2. Forms a ternary complex with IGFBP3 and ALS.

It is found in the secreted. The insulin-like growth factors, isolated from plasma, are structurally and functionally related to insulin but have a much higher growth-promoting activity. May be a physiological regulator of [1-14C]-2-deoxy-D-glucose (2DG) transport and glycogen synthesis in osteoblasts. Stimulates glucose transport in bone-derived osteoblastic (PyMS) cells and is effective at much lower concentrations than insulin, not only regarding glycogen and DNA synthesis but also with regard to enhancing glucose uptake. May play a role in synapse maturation. Ca(2+)-dependent exocytosis of IGF1 is required for sensory perception of smell in the olfactory bulb. Acts as a ligand for IGF1R. Binds to the alpha subunit of IGF1R, leading to the activation of the intrinsic tyrosine kinase activity which autophosphorylates tyrosine residues in the beta subunit thus initiating a cascade of down-stream signaling events leading to activation of the PI3K-AKT/PKB and the Ras-MAPK pathways. Binds to integrins ITGAV:ITGB3 and ITGA6:ITGB4. Its binding to integrins and subsequent ternary complex formation with integrins and IGFR1 are essential for IGF1 signaling. Induces the phosphorylation and activation of IGFR1, MAPK3/ERK1, MAPK1/ERK2 and AKT1. As part of the MAPK/ERK signaling pathway, acts as a negative regulator of apoptosis in cardiomyocytes via promotion of STUB1/CHIP-mediated ubiquitination and degradation of ICER-type isoforms of CREM. In Mus musculus (Mouse), this protein is Insulin-like growth factor 1.